Reading from the N-terminus, the 351-residue chain is Cobalt-precorrin-5B C(1)-methyltransferase (351 aa).

Belongs to the CbiD family.

It carries out the reaction Co-precorrin-5B + S-adenosyl-L-methionine = Co-precorrin-6A + S-adenosyl-L-homocysteine. The protein operates within cofactor biosynthesis; adenosylcobalamin biosynthesis; cob(II)yrinate a,c-diamide from sirohydrochlorin (anaerobic route): step 6/10. Catalyzes the methylation of C-1 in cobalt-precorrin-5B to form cobalt-precorrin-6A. The sequence is that of Cobalt-precorrin-5B C(1)-methyltransferase from Thermosipho africanus (strain TCF52B).